Reading from the N-terminus, the 523-residue chain is Bifunctional purine biosynthesis protein PurH (523 aa).

The region spanning 1 to 152 is the MGS-like domain; the sequence is MSTDDGRRPI…KNHPSAAVVT (152 aa).

The protein belongs to the PurH family.

The enzyme catalyses (6R)-10-formyltetrahydrofolate + 5-amino-1-(5-phospho-beta-D-ribosyl)imidazole-4-carboxamide = 5-formamido-1-(5-phospho-D-ribosyl)imidazole-4-carboxamide + (6S)-5,6,7,8-tetrahydrofolate. It catalyses the reaction IMP + H2O = 5-formamido-1-(5-phospho-D-ribosyl)imidazole-4-carboxamide. Its pathway is purine metabolism; IMP biosynthesis via de novo pathway; 5-formamido-1-(5-phospho-D-ribosyl)imidazole-4-carboxamide from 5-amino-1-(5-phospho-D-ribosyl)imidazole-4-carboxamide (10-formyl THF route): step 1/1. It participates in purine metabolism; IMP biosynthesis via de novo pathway; IMP from 5-formamido-1-(5-phospho-D-ribosyl)imidazole-4-carboxamide: step 1/1. The chain is Bifunctional purine biosynthesis protein PurH from Mycobacterium bovis (strain BCG / Pasteur 1173P2).